Consider the following 307-residue polypeptide: S-methyl-5'-thioadenosine phosphorylase (307 aa).

Phosphate-binding positions include S16, 59–60, and 92–93; these read RH and SA. M198 serves as a coordination point for substrate. Residue S199 coordinates phosphate. 222–224 is a substrate binding site; that stretch reads DYD.

This sequence belongs to the PNP/MTAP phosphorylase family. MTAP subfamily. In terms of assembly, homotrimer.

Its subcellular location is the cytoplasm. It is found in the nucleus. It carries out the reaction S-methyl-5'-thioadenosine + phosphate = 5-(methylsulfanyl)-alpha-D-ribose 1-phosphate + adenine. The protein operates within amino-acid biosynthesis; L-methionine biosynthesis via salvage pathway; S-methyl-5-thio-alpha-D-ribose 1-phosphate from S-methyl-5'-thioadenosine (phosphorylase route): step 1/1. Functionally, catalyzes the reversible phosphorylation of S-methyl-5'-thioadenosine (MTA) to adenine and 5-methylthioribose-1-phosphate. Involved in the breakdown of MTA, a major by-product of polyamine biosynthesis. Responsible for the first step in the methionine salvage pathway after MTA has been generated from S-adenosylmethionine. Has broad substrate specificity with 6-aminopurine nucleosides as preferred substrates. This chain is S-methyl-5'-thioadenosine phosphorylase, found in Schizosaccharomyces pombe (strain 972 / ATCC 24843) (Fission yeast).